Here is a 209-residue protein sequence, read N- to C-terminus: Kynurenine formamidase (209 aa).

Trp18 lines the substrate pocket. Zn(2+) is bound by residues His48, His52, and Asp54. Residue His58 is the Proton donor/acceptor of the active site. His160 and Glu172 together coordinate Zn(2+).

This sequence belongs to the Cyclase 1 superfamily. KynB family. As to quaternary structure, homodimer. Zn(2+) serves as cofactor.

It carries out the reaction N-formyl-L-kynurenine + H2O = L-kynurenine + formate + H(+). It participates in amino-acid degradation; L-tryptophan degradation via kynurenine pathway; L-kynurenine from L-tryptophan: step 2/2. Functionally, catalyzes the hydrolysis of N-formyl-L-kynurenine to L-kynurenine, the second step in the kynurenine pathway of tryptophan degradation. This Paraburkholderia phymatum (strain DSM 17167 / CIP 108236 / LMG 21445 / STM815) (Burkholderia phymatum) protein is Kynurenine formamidase.